Reading from the N-terminus, the 538-residue chain is Bifunctional purine biosynthesis protein PurH (538 aa).

The region spanning 8–158 (IPAPDKVQVK…KNHAYVTTLT (151 aa)) is the MGS-like domain.

The protein belongs to the PurH family.

The enzyme catalyses (6R)-10-formyltetrahydrofolate + 5-amino-1-(5-phospho-beta-D-ribosyl)imidazole-4-carboxamide = 5-formamido-1-(5-phospho-D-ribosyl)imidazole-4-carboxamide + (6S)-5,6,7,8-tetrahydrofolate. The catalysed reaction is IMP + H2O = 5-formamido-1-(5-phospho-D-ribosyl)imidazole-4-carboxamide. Its pathway is purine metabolism; IMP biosynthesis via de novo pathway; 5-formamido-1-(5-phospho-D-ribosyl)imidazole-4-carboxamide from 5-amino-1-(5-phospho-D-ribosyl)imidazole-4-carboxamide (10-formyl THF route): step 1/1. It participates in purine metabolism; IMP biosynthesis via de novo pathway; IMP from 5-formamido-1-(5-phospho-D-ribosyl)imidazole-4-carboxamide: step 1/1. In Rhizobium rhizogenes (strain K84 / ATCC BAA-868) (Agrobacterium radiobacter), this protein is Bifunctional purine biosynthesis protein PurH.